The primary structure comprises 123 residues: Putative membrane protein insertion efficiency factor (123 aa).

The tract at residues 1–23 is disordered; that stretch reads MGSCGGKHTGKGAPKPYSRNFTD.

This sequence belongs to the UPF0161 family.

It is found in the cell inner membrane. Its function is as follows. Could be involved in insertion of integral membrane proteins into the membrane. The sequence is that of Putative membrane protein insertion efficiency factor from Brucella ovis (strain ATCC 25840 / 63/290 / NCTC 10512).